Here is a 114-residue protein sequence, read N- to C-terminus: MNKQDPKRSNEPPVWLMFSAGGTISAICFPVLILILGILLPLGLIPMDNIIVFAHTWLGKLVILAVTIFPMWAGMHRVHHGLHDLKIHLPASGWLFYGLSTLYSIVVLFAVIAL.

3 helical membrane-spanning segments follow: residues 27-47 (ICFPVLILILGILLPLGLIPM), 50-70 (IIVFAHTWLGKLVILAVTIFP), and 94-114 (WLFYGLSTLYSIVVLFAVIAL).

It belongs to the FrdD family. In terms of assembly, part of an enzyme complex containing four subunits: a flavoprotein (FrdA), an iron-sulfur protein (FrdB), and two hydrophobic anchor proteins (FrdC and FrdD).

It is found in the cell inner membrane. Its function is as follows. Anchors the catalytic components of the fumarate reductase complex to the cell membrane, binds quinones. In Haemophilus ducreyi (strain 35000HP / ATCC 700724), this protein is Fumarate reductase subunit D.